We begin with the raw amino-acid sequence, 358 residues long: Protein UL24 (358 aa).

The protein belongs to the herpesviridae US22 family.

It localises to the virion tegument. The chain is Protein UL24 (UL24) from Homo sapiens (Human).